Reading from the N-terminus, the 326-residue chain is Dolichyl-phosphate beta-glucosyltransferase (326 aa).

At 1-7 (MWTCLCQ) the chain is on the lumenal side. A helical membrane pass occupies residues 8–28 (LCFYLLSTLAVAALSIAALVL). Residues 29-326 (YKTKPYPNIK…RIASIQKKEK (298 aa)) lie on the Cytoplasmic side of the membrane.

It belongs to the glycosyltransferase 2 family.

Its subcellular location is the endoplasmic reticulum membrane. It carries out the reaction a di-trans,poly-cis-dolichyl phosphate + UDP-alpha-D-glucose = a di-trans,poly-cis-dolichyl beta-D-glucosyl phosphate + UDP. It functions in the pathway protein modification; protein glycosylation. Its function is as follows. Required for normal production of N-glycosylated proteins in the endoplasmic reticulum (ER). Required for embryonic segmentation, dorsal-ventral patterning and gastrulation. Required for chitin orientation and shaping of the apical and lateral plasma membranes of epidermal cells during cuticle differentiation. Also required for correctly shaping apical membrane topology of the epithelia of other organs such as the midgut and the hindgut. The protein is Dolichyl-phosphate beta-glucosyltransferase (wol) of Drosophila melanogaster (Fruit fly).